The following is a 187-amino-acid chain: Adenine phosphoribosyltransferase (187 aa).

133-137 (ATGGS) is an AMP binding site.

It belongs to the purine/pyrimidine phosphoribosyltransferase family. As to quaternary structure, homodimer. The cofactor is Mg(2+).

Its subcellular location is the cytoplasm. The protein localises to the nucleus. The catalysed reaction is AMP + diphosphate = 5-phospho-alpha-D-ribose 1-diphosphate + adenine. Its pathway is purine metabolism; AMP biosynthesis via salvage pathway; AMP from adenine: step 1/1. In terms of biological role, catalyzes a salvage reaction resulting in the formation of AMP, that is energically less costly than de novo synthesis. This Eremothecium gossypii (strain ATCC 10895 / CBS 109.51 / FGSC 9923 / NRRL Y-1056) (Yeast) protein is Adenine phosphoribosyltransferase (APT1).